Consider the following 327-residue polypeptide: D-alanine--D-alanine ligase (327 aa).

In terms of domain architecture, ATP-grasp spans Lys-113–Ala-312. Ala-139–Thr-194 lines the ATP pocket. Asp-266, Glu-279, and Asn-281 together coordinate Mg(2+).

Belongs to the D-alanine--D-alanine ligase family. Mg(2+) is required as a cofactor. Requires Mn(2+) as cofactor.

Its subcellular location is the cytoplasm. The catalysed reaction is 2 D-alanine + ATP = D-alanyl-D-alanine + ADP + phosphate + H(+). The protein operates within cell wall biogenesis; peptidoglycan biosynthesis. In terms of biological role, cell wall formation. In Cupriavidus necator (strain ATCC 17699 / DSM 428 / KCTC 22496 / NCIMB 10442 / H16 / Stanier 337) (Ralstonia eutropha), this protein is D-alanine--D-alanine ligase.